The following is a 185-amino-acid chain: HTH-type transcriptional repressor OpcR (185 aa).

The H-T-H motif DNA-binding region spans 49-73; sequence LSELSEATGMSKTRMSQVVREMIDA.

It belongs to the GbsR family.

Its activity is regulated as follows. Is not choline-responsive. In terms of biological role, negatively regulates the transcription of the opuC operon. In the absence of GbsR, is also a negative regulator of the opuB operon. Binds to an inverted repeat in the promoter region of the operons. This chain is HTH-type transcriptional repressor OpcR (opcR), found in Bacillus subtilis (strain 168).